We begin with the raw amino-acid sequence, 115 residues long: Large ribosomal subunit protein bL19 (115 aa).

It belongs to the bacterial ribosomal protein bL19 family.

Its function is as follows. This protein is located at the 30S-50S ribosomal subunit interface and may play a role in the structure and function of the aminoacyl-tRNA binding site. This is Large ribosomal subunit protein bL19 from Kosmotoga olearia (strain ATCC BAA-1733 / DSM 21960 / TBF 19.5.1).